Here is a 1167-residue protein sequence, read N- to C-terminus: DNA-directed RNA polymerase subunit beta (1167 aa).

This sequence belongs to the RNA polymerase beta chain family. As to quaternary structure, the RNAP catalytic core consists of 2 alpha, 1 beta, 1 beta' and 1 omega subunit. When a sigma factor is associated with the core the holoenzyme is formed, which can initiate transcription.

The enzyme catalyses RNA(n) + a ribonucleoside 5'-triphosphate = RNA(n+1) + diphosphate. In terms of biological role, DNA-dependent RNA polymerase catalyzes the transcription of DNA into RNA using the four ribonucleoside triphosphates as substrates. This Treponema denticola (strain ATCC 35405 / DSM 14222 / CIP 103919 / JCM 8153 / KCTC 15104) protein is DNA-directed RNA polymerase subunit beta.